A 125-amino-acid chain; its full sequence is Cyclic diguanosine monophosphate-binding protein PA4608 (125 aa).

Position 6–13 (6–13) interacts with 3',3'-c-di-GMP; sequence DERRRFHR. Positions 7-103 constitute a PilZ domain; the sequence is ERRRFHRIAF…SISHLRRLVE (97 aa). An RXXXR motif; surrounds the surface of the c-di-GMP binding site motif is present at residues 9 to 13; it reads RRFHR. Positions 35–40 match the DXSXXG motif; surrounds the surface of the c-di-GMP binding site motif; it reads DVSLHG. W77 provides a ligand contact to 3',3'-c-di-GMP.

Monomer in both c-di-GMP-bound and free forms.

Its function is as follows. Binds the second messenger bis-(3'-5') cyclic dimeric guanosine monophosphate (c-di-GMP). Can bind two c-di-GMP molecules per monomer. May play a role in bacterial second-messenger regulated processes. Binding to c-di-GMP induces a conformational change of the C- and N-termini resulting in the exposure of a highly negative surface on one side of the protein to a possible effector protein. The polypeptide is Cyclic diguanosine monophosphate-binding protein PA4608 (Pseudomonas aeruginosa (strain ATCC 15692 / DSM 22644 / CIP 104116 / JCM 14847 / LMG 12228 / 1C / PRS 101 / PAO1)).